The sequence spans 166 residues: NAD(P)H-quinone oxidoreductase subunit I, chloroplastic (166 aa).

4Fe-4S ferredoxin-type domains follow at residues 55-84 and 95-124; these read GRIHFEFDKCIACEVCVRVCPIDLPVVDWK and LNYSIDFGICIFCGNCVEYCPTNCLSMTEE. Residues Cys64, Cys67, Cys70, Cys74, Cys104, Cys107, Cys110, and Cys114 each coordinate [4Fe-4S] cluster.

Belongs to the complex I 23 kDa subunit family. NDH is composed of at least 16 different subunits, 5 of which are encoded in the nucleus. [4Fe-4S] cluster serves as cofactor.

The protein localises to the plastid. Its subcellular location is the chloroplast thylakoid membrane. The enzyme catalyses a plastoquinone + NADH + (n+1) H(+)(in) = a plastoquinol + NAD(+) + n H(+)(out). It catalyses the reaction a plastoquinone + NADPH + (n+1) H(+)(in) = a plastoquinol + NADP(+) + n H(+)(out). NDH shuttles electrons from NAD(P)H:plastoquinone, via FMN and iron-sulfur (Fe-S) centers, to quinones in the photosynthetic chain and possibly in a chloroplast respiratory chain. The immediate electron acceptor for the enzyme in this species is believed to be plastoquinone. Couples the redox reaction to proton translocation, and thus conserves the redox energy in a proton gradient. The protein is NAD(P)H-quinone oxidoreductase subunit I, chloroplastic of Encelia californica (Bush sunflower).